Reading from the N-terminus, the 404-residue chain is ATP phosphoribosyltransferase regulatory subunit (404 aa).

The protein belongs to the class-II aminoacyl-tRNA synthetase family. HisZ subfamily. As to quaternary structure, heteromultimer composed of HisG and HisZ subunits.

The protein resides in the cytoplasm. Its pathway is amino-acid biosynthesis; L-histidine biosynthesis; L-histidine from 5-phospho-alpha-D-ribose 1-diphosphate: step 1/9. Functionally, required for the first step of histidine biosynthesis. May allow the feedback regulation of ATP phosphoribosyltransferase activity by histidine. The sequence is that of ATP phosphoribosyltransferase regulatory subunit from Trichormus variabilis (strain ATCC 29413 / PCC 7937) (Anabaena variabilis).